The primary structure comprises 464 residues: Argininosuccinate lyase (464 aa).

Belongs to the lyase 1 family. Argininosuccinate lyase subfamily.

Its subcellular location is the cytoplasm. The enzyme catalyses 2-(N(omega)-L-arginino)succinate = fumarate + L-arginine. It functions in the pathway amino-acid biosynthesis; L-arginine biosynthesis; L-arginine from L-ornithine and carbamoyl phosphate: step 3/3. The sequence is that of Argininosuccinate lyase from Pseudomonas paraeruginosa (strain DSM 24068 / PA7) (Pseudomonas aeruginosa (strain PA7)).